Here is a 35-residue protein sequence, read N- to C-terminus: Leukocyte cysteine proteinase inhibitor 2 (35 aa).

Residues 1-35 form a disordered region; that stretch reads LAGGLTEPRPADTEIQEIANKVKPQLEEKTNKKYD. The segment covering 24–35 has biased composition (basic and acidic residues); the sequence is PQLEEKTNKKYD.

This sequence belongs to the cystatin family.

It is found in the cytoplasm. In terms of biological role, potent inhibitor of cathepsins L and S, and papain. The polypeptide is Leukocyte cysteine proteinase inhibitor 2 (Sus scrofa (Pig)).